Consider the following 347-residue polypeptide: Probable replication factor C subunit 3 (347 aa).

The protein belongs to the activator 1 small subunits family. In terms of assembly, heteropentamer of various rfc subunits that forms a complex (RFC) with PCNA in the presence of ATP.

It is found in the nucleus. Functionally, the elongation of primed DNA templates by DNA polymerase delta and epsilon requires the action of the accessory proteins PCNA and activator 1. This is Probable replication factor C subunit 3 (rfc3) from Dictyostelium discoideum (Social amoeba).